We begin with the raw amino-acid sequence, 119 residues long: Mitochondrial coiled-coil domain protein 1 (119 aa).

The transit peptide at 1 to 24 (MVLPLPWLSRYHFLRLLLPSWSLA) directs the protein to the mitochondrion. A disordered region spans residues 25 to 65 (PQGSHGCCSQNPKASMEEQTSSRGNGKMTSPPRGPGTHRTA). Residues 31 to 52 (CCSQNPKASMEEQTSSRGNGKM) show a composition bias toward polar residues. Residues 62 to 116 (HRTAELARAEELLEQQLELYQALLEGQEGAWEAQALVLKIQKLKEQMRRHQESLG) adopt a coiled-coil conformation.

Widely expressed. Expressed in adult and fetal liver, kidney and lung. Expressed in fetal brain. Weakly expressed in fetal spleen.

The protein resides in the mitochondrion. This Homo sapiens (Human) protein is Mitochondrial coiled-coil domain protein 1 (MCCD1).